A 65-amino-acid chain; its full sequence is Ringhalexin (65 aa).

Intrachain disulfides connect Cys-3–Cys-24, Cys-17–Cys-42, Cys-46–Cys-57, and Cys-58–Cys-63.

In terms of tissue distribution, expressed by the venom gland.

It is found in the secreted. Functionally, has anticoagulant activity, since it is able to inhibit the activation of coagulation factor X (F10) by coagulation factor VIIa (F7) (IC(50)=123.8 nM). Also shows weak irreversible neurotoxicity. The sequence is that of Ringhalexin from Hemachatus haemachatus (Rinkhals).